The chain runs to 572 residues: Na(+)/citrate cotransporter (572 aa).

The next 8 helical transmembrane spans lie at 13-33, 53-73, 80-100, 124-144, 218-238, 255-275, 315-335, and 357-377; these read SFVI…LVPD, VIPV…LKVL, VQYM…ATAV, LMLG…NTAT, AASI…VLLG, SWFA…WLWL, PLSY…ILWF, and HVTD…VPSQ. Asn-382 carries N-linked (GlcNAc...) asparagine glycosylation. Transmembrane regions (helical) follow at residues 410-430, 443-463, 491-511, and 532-552; these read VPWG…GCET, PLSS…VAMT, PLYV…LPVA, and TGLV…NTWG. Asn-566 is a glycosylation site (N-linked (GlcNAc...) asparagine).

It belongs to the SLC13A/DASS transporter (TC 2.A.47) family. NADC subfamily. Homodimer. In terms of tissue distribution, expressed in liver, testis and brain.

The protein resides in the cell membrane. The enzyme catalyses citrate(out) + 4 Na(+)(out) = citrate(in) + 4 Na(+)(in). With respect to regulation, inhibited by Li(+). In terms of biological role, high-affinity sodium/citrate cotransporter that mediates citrate entry into cells, which is a critical participant of biochemical pathways. May function in various metabolic processes in which citrate has a critical role such as energy production (Krebs cycle), fatty acid synthesis, cholesterol synthesis, glycolysis, and gluconeogenesis. Transports citrate into the cell in a Na(+)-dependent manner, recognizing the trivalent form of citrate (physiological pH) rather than the divalent form. Can recognize succinate as a substrate, but its affinity for succinate is several fold lower than for citrate. The stoichiometry is probably 4 Na(+) for each carboxylate, irrespective of whether the translocated substrate is divalent or trivalent, rendering the process electrogenic. Involved in the regulation of citrate levels in the brain. In Rattus norvegicus (Rat), this protein is Na(+)/citrate cotransporter (Slc13a5).